We begin with the raw amino-acid sequence, 384 residues long: MKALHFGAGNIGRGFIGYLLYKSNYETTFVDIFDKVVDDINKYKRYTVITLSTSKNKEKVENVRAVNLKDSVALEKEVLEADLITTSLGLNNLKSTGELLRGFLKKRSEINDKPLDIIACENALFASDVLKKAILDGADEELKKYLEKSVGFPNCTVDRIVPNVDIEKELPIDVAVEDFYEWDIEKNKVKINNKIIGAEYVEKLDPYLERKLFLLNGAHATIAYLGYLKGYKYIHEAIKDKEINKIIVGFHSEAVQALSEKHKIDIQILKEYSNKLLKRFENEYLKDDVSRVGRDPMRKLSSNDRLITPLKLCCDLKIDFTNILFGVASGYLFNYKEDEKAQGIQNIITKEGIKKAISNVSQIKEGDYLNNMIAYKYEELKKQN.

3–14 is an NAD(+) binding site; sequence ALHFGAGNIGRG.

This sequence belongs to the mannitol dehydrogenase family.

It carries out the reaction D-mannitol 1-phosphate + NAD(+) = beta-D-fructose 6-phosphate + NADH + H(+). This Clostridium acetobutylicum (strain ATCC 824 / DSM 792 / JCM 1419 / IAM 19013 / LMG 5710 / NBRC 13948 / NRRL B-527 / VKM B-1787 / 2291 / W) protein is Mannitol-1-phosphate 5-dehydrogenase (mtlD).